A 173-amino-acid chain; its full sequence is Crossover junction endodeoxyribonuclease RuvC (173 aa).

Active-site residues include D8, E67, and D139. D8, E67, and D139 together coordinate Mg(2+).

Belongs to the RuvC family. As to quaternary structure, homodimer which binds Holliday junction (HJ) DNA. The HJ becomes 2-fold symmetrical on binding to RuvC with unstacked arms; it has a different conformation from HJ DNA in complex with RuvA. In the full resolvosome a probable DNA-RuvA(4)-RuvB(12)-RuvC(2) complex forms which resolves the HJ. Mg(2+) is required as a cofactor.

It is found in the cytoplasm. It carries out the reaction Endonucleolytic cleavage at a junction such as a reciprocal single-stranded crossover between two homologous DNA duplexes (Holliday junction).. The RuvA-RuvB-RuvC complex processes Holliday junction (HJ) DNA during genetic recombination and DNA repair. Endonuclease that resolves HJ intermediates. Cleaves cruciform DNA by making single-stranded nicks across the HJ at symmetrical positions within the homologous arms, yielding a 5'-phosphate and a 3'-hydroxyl group; requires a central core of homology in the junction. The consensus cleavage sequence is 5'-(A/T)TT(C/G)-3'. Cleavage occurs on the 3'-side of the TT dinucleotide at the point of strand exchange. HJ branch migration catalyzed by RuvA-RuvB allows RuvC to scan DNA until it finds its consensus sequence, where it cleaves and resolves the cruciform DNA. The polypeptide is Crossover junction endodeoxyribonuclease RuvC (Shigella flexneri serotype 5b (strain 8401)).